Reading from the N-terminus, the 662-residue chain is MRPSVLVQTSSIVSSALVSSAIGYAIGWPVSKYFDSNTTMRLLLSPVIGLGIFGAVAVSIFHFLPITAINLMLIVLGLSAVAFWLSKGTIDPLLRSPASPGFCWFTVAFLLCLLPAFEIIPQHYGGSVGVGHPIWDHAKIAIVNEIAQNGLPPANPFHSEAGSPNTLIYYYVWHFIAACSSVITGATGWEADIALTGMTALFSTFVVTWLAVARSRSAYAAWWSLPLLFVGSLKPAVRFVFGKWLEKWMAPEHGLQTWIIQAPWVPQHVFSGTLALIAIMAYLRILYSNAGRNMALAVFMGAILASAYGSSMWAGSLSLLLILPLVGALSVSHVLKVKRLLEVLISLSVTVVITLLCAAVLIREQSAILHTRKVVEFWVFPIFAGDYWFLDIPGFWLVLVFLEFGIIYLSFLIWSFARPSDDSKRYAHIDCALTVSVLAPLFCTQILHSVIMYNDLGWRVLIPSMLVMTALTSGLFSTTIGKGTLVGRLTTITAIILLAPSILVGAKSVYSNTFKFQVEGPDSEEGTAFKASPEMWKAVREVTPPNEAVANNPLDLASVTYTPANISWAILSQRRHCGTTLDFLRAYAAQLTPKKASEIYNFFVRAFAGLATEDHLRIMKEKYRCRTLVVTSRDGLWGKPVLDNNSVYKLVSEKKGKWRIYR.

The next 16 membrane-spanning stretches (helical) occupy residues 10 to 30 (SSIV…GWPV), 46 to 66 (PVIG…FLPI), 68 to 88 (AINL…LSKG), 101 to 121 (GFCW…EIIP), 167 to 187 (LIYY…TGAT), 193 to 213 (IALT…LAVA), 217 to 237 (SAYA…KPAV), 263 to 283 (PWVP…MAYL), 285 to 305 (ILYS…AILA), 312 to 332 (MWAG…LSVS), 342 to 362 (EVLI…AVLI), 373 to 393 (KVVE…LDIP), 394 to 414 (GFWL…FLIW), 432 to 452 (ALTV…SVIM), 460 to 480 (VLIP…STTI), and 485 to 505 (LVGR…ILVG).

Its subcellular location is the cell membrane. This is an uncharacterized protein from Sinorhizobium fredii (strain NBRC 101917 / NGR234).